The sequence spans 156 residues: Ribosomal RNA large subunit methyltransferase H (156 aa).

S-adenosyl-L-methionine contacts are provided by residues Leu-72, Gly-104, and 123 to 128 (FGAMVW).

It belongs to the RNA methyltransferase RlmH family. Homodimer.

Its subcellular location is the cytoplasm. The catalysed reaction is pseudouridine(1915) in 23S rRNA + S-adenosyl-L-methionine = N(3)-methylpseudouridine(1915) in 23S rRNA + S-adenosyl-L-homocysteine + H(+). Specifically methylates the pseudouridine at position 1915 (m3Psi1915) in 23S rRNA. This Dinoroseobacter shibae (strain DSM 16493 / NCIMB 14021 / DFL 12) protein is Ribosomal RNA large subunit methyltransferase H.